Here is a 169-residue protein sequence, read N- to C-terminus: Large ribosomal subunit protein uL10 (169 aa).

Belongs to the universal ribosomal protein uL10 family. As to quaternary structure, part of the ribosomal stalk of the 50S ribosomal subunit. The N-terminus interacts with L11 and the large rRNA to form the base of the stalk. The C-terminus forms an elongated spine to which L12 dimers bind in a sequential fashion forming a multimeric L10(L12)X complex.

Its function is as follows. Forms part of the ribosomal stalk, playing a central role in the interaction of the ribosome with GTP-bound translation factors. In Rickettsia akari (strain Hartford), this protein is Large ribosomal subunit protein uL10.